The chain runs to 369 residues: Adenosine 3'-phospho 5'-phosphosulfate transporter 2 (369 aa).

N-linked (GlcNAc...) asparagine glycosylation occurs at Asn-39. Transmembrane regions (helical) follow at residues 46-66 (LTQF…YGYL), 79-99 (YGWY…LIEL), 115-135 (MLIA…LGYL), 138-158 (PTQV…GVFI), 168-188 (VSAA…DSTI), and 191-211 (NFNL…AVIG). Asn-222 carries N-linked (GlcNAc...) asparagine glycosylation. A run of 4 helical transmembrane segments spans residues 235 to 255 (IGFV…PAVA), 266 to 285 (GYAF…VLAL), 292 to 314 (LLAV…LFFA), and 317 to 337 (FTFQ…LNVY).

The protein belongs to the nucleotide-sugar transporter family. SLC35B subfamily.

It is found in the golgi apparatus membrane. It catalyses the reaction 3'-phosphoadenylyl sulfate(in) + adenosine 3',5'-bisphosphate(out) = 3'-phosphoadenylyl sulfate(out) + adenosine 3',5'-bisphosphate(in). Probably functions as a 3'-phosphoadenylyl sulfate:adenosine 3',5'-bisphosphate antiporter at the Golgi membranes. Mediates the transport from the cytosol into the lumen of the Golgi of 3'-phosphoadenylyl sulfate/adenosine 3'-phospho 5'-phosphosulfate (PAPS), a universal sulfuryl donor for sulfation events that take place in that compartment. This Mus musculus (Mouse) protein is Adenosine 3'-phospho 5'-phosphosulfate transporter 2.